Reading from the N-terminus, the 342-residue chain is Selenide, water dikinase (342 aa).

The active site involves cysteine 13. ATP is bound by residues lysine 16 and serine 44–aspartate 46. Position 47 (aspartate 47) interacts with Mg(2+). ATP contacts are provided by residues aspartate 64, aspartate 87, and glycine 134–serine 136. Residue aspartate 87 coordinates Mg(2+). Aspartate 222 provides a ligand contact to Mg(2+).

It belongs to the selenophosphate synthase 1 family. Class I subfamily. In terms of assembly, homodimer. Mg(2+) is required as a cofactor.

It catalyses the reaction hydrogenselenide + ATP + H2O = selenophosphate + AMP + phosphate + 2 H(+). Functionally, synthesizes selenophosphate from selenide and ATP. In Agathobacter rectalis (strain ATCC 33656 / DSM 3377 / JCM 17463 / KCTC 5835 / VPI 0990) (Eubacterium rectale), this protein is Selenide, water dikinase.